The following is a 97-amino-acid chain: Nucleoid-associated protein Hac_0048 (97 aa).

Belongs to the YbaB/EbfC family. In terms of assembly, homodimer.

It is found in the cytoplasm. The protein localises to the nucleoid. Its function is as follows. Binds to DNA and alters its conformation. May be involved in regulation of gene expression, nucleoid organization and DNA protection. In Helicobacter acinonychis (strain Sheeba), this protein is Nucleoid-associated protein Hac_0048.